The following is a 95-amino-acid chain: MKITKAEVDAVALLARLELTPEETETFTGQMDAILAYVEKLNELDTSGIIPTSHAVPVENAFRDDAVRPSIGVENALANAPDRVEGFFRVPKVIE.

This sequence belongs to the GatC family. As to quaternary structure, heterotrimer of A, B and C subunits.

It carries out the reaction L-glutamyl-tRNA(Gln) + L-glutamine + ATP + H2O = L-glutaminyl-tRNA(Gln) + L-glutamate + ADP + phosphate + H(+). It catalyses the reaction L-aspartyl-tRNA(Asn) + L-glutamine + ATP + H2O = L-asparaginyl-tRNA(Asn) + L-glutamate + ADP + phosphate + 2 H(+). Functionally, allows the formation of correctly charged Asn-tRNA(Asn) or Gln-tRNA(Gln) through the transamidation of misacylated Asp-tRNA(Asn) or Glu-tRNA(Gln) in organisms which lack either or both of asparaginyl-tRNA or glutaminyl-tRNA synthetases. The reaction takes place in the presence of glutamine and ATP through an activated phospho-Asp-tRNA(Asn) or phospho-Glu-tRNA(Gln). The protein is Aspartyl/glutamyl-tRNA(Asn/Gln) amidotransferase subunit C of Geobacter metallireducens (strain ATCC 53774 / DSM 7210 / GS-15).